The chain runs to 281 residues: Putative zinc-binding protein ORF11 (281 aa).

The protein is Putative zinc-binding protein ORF11 (ORF11) of Ictaluridae (bullhead catfishes).